Consider the following 959-residue polypeptide: Isoleucine--tRNA ligase (959 aa).

Residues 60–70 carry the 'HIGH' region motif; the sequence is PYANGSLHIGH. Glutamate 571 serves as a coordination point for L-isoleucyl-5'-AMP. The short motif at 612-616 is the 'KMSKS' region element; that stretch reads KMSKS. Lysine 615 is a binding site for ATP. The Zn(2+) site is built by cysteine 928, cysteine 931, cysteine 948, and cysteine 951.

It belongs to the class-I aminoacyl-tRNA synthetase family. IleS type 1 subfamily. Monomer. It depends on Zn(2+) as a cofactor.

The protein localises to the cytoplasm. It carries out the reaction tRNA(Ile) + L-isoleucine + ATP = L-isoleucyl-tRNA(Ile) + AMP + diphosphate. In terms of biological role, catalyzes the attachment of isoleucine to tRNA(Ile). As IleRS can inadvertently accommodate and process structurally similar amino acids such as valine, to avoid such errors it has two additional distinct tRNA(Ile)-dependent editing activities. One activity is designated as 'pretransfer' editing and involves the hydrolysis of activated Val-AMP. The other activity is designated 'posttransfer' editing and involves deacylation of mischarged Val-tRNA(Ile). The protein is Isoleucine--tRNA ligase of Nostoc punctiforme (strain ATCC 29133 / PCC 73102).